Consider the following 104-residue polypeptide: Type IV secretion system protein PtlB homolog (104 aa).

The helical transmembrane segment at Ile30–Leu50 threads the bilayer.

This sequence belongs to the virB3 family.

It is found in the cell membrane. In Bordetella bronchiseptica (strain ATCC BAA-588 / NCTC 13252 / RB50) (Alcaligenes bronchisepticus), this protein is Type IV secretion system protein PtlB homolog (ptlB).